The primary structure comprises 133 residues: Large ribosomal subunit protein uL14 (133 aa).

Belongs to the universal ribosomal protein uL14 family. As to quaternary structure, part of the 50S ribosomal subunit. Forms a cluster with proteins L3 and L24e, part of which may contact the 16S rRNA in 2 intersubunit bridges.

In terms of biological role, binds to 23S rRNA. Forms part of two intersubunit bridges in the 70S ribosome. The protein is Large ribosomal subunit protein uL14 of Nanoarchaeum equitans (strain Kin4-M).